The following is a 192-amino-acid chain: dTTP/UTP pyrophosphatase (192 aa).

The active-site Proton acceptor is the aspartate 68.

This sequence belongs to the Maf family. YhdE subfamily. It depends on a divalent metal cation as a cofactor.

It is found in the cytoplasm. It catalyses the reaction dTTP + H2O = dTMP + diphosphate + H(+). The catalysed reaction is UTP + H2O = UMP + diphosphate + H(+). Nucleoside triphosphate pyrophosphatase that hydrolyzes dTTP and UTP. May have a dual role in cell division arrest and in preventing the incorporation of modified nucleotides into cellular nucleic acids. This is dTTP/UTP pyrophosphatase from Cereibacter sphaeroides (strain ATCC 17023 / DSM 158 / JCM 6121 / CCUG 31486 / LMG 2827 / NBRC 12203 / NCIMB 8253 / ATH 2.4.1.) (Rhodobacter sphaeroides).